The sequence spans 433 residues: Enolase (433 aa).

Q167 is a binding site for (2R)-2-phosphoglycerate. E209 acts as the Proton donor in catalysis. Residues D246, E291, and D318 each coordinate Mg(2+). K343, R372, S373, and K394 together coordinate (2R)-2-phosphoglycerate. Catalysis depends on K343, which acts as the Proton acceptor.

This sequence belongs to the enolase family. In terms of assembly, component of the RNA degradosome, a multiprotein complex involved in RNA processing and mRNA degradation. The cofactor is Mg(2+).

It is found in the cytoplasm. It localises to the secreted. Its subcellular location is the cell surface. It carries out the reaction (2R)-2-phosphoglycerate = phosphoenolpyruvate + H2O. The protein operates within carbohydrate degradation; glycolysis; pyruvate from D-glyceraldehyde 3-phosphate: step 4/5. In terms of biological role, catalyzes the reversible conversion of 2-phosphoglycerate (2-PG) into phosphoenolpyruvate (PEP). It is essential for the degradation of carbohydrates via glycolysis. In Histophilus somni (strain 129Pt) (Haemophilus somnus), this protein is Enolase.